The chain runs to 358 residues: Bi-functional coumaroyl CoA and feruloyl CoA ortho-hydroxylase F6H2-1-1 (358 aa).

One can recognise a Fe2OG dioxygenase domain in the interval 207-308 (GSRRININYY…RISVPVFVNP (102 aa)). Position 216 (Y216) interacts with 2-oxoglutarate. The Fe cation site is built by H231, D233, and H289. 2-oxoglutarate-binding residues include R299 and S301.

It belongs to the iron/ascorbate-dependent oxidoreductase family. It depends on L-ascorbate as a cofactor. Requires Fe(2+) as cofactor. As to expression, mostly expressed in underground stems and stems, and, at low levels, in tubers, leaves and petioles.

The enzyme catalyses (E)-4-coumaroyl-CoA + 2-oxoglutarate + O2 = (E)-2,4-dihydroxycinnamoyl-CoA + succinate + CO2. It carries out the reaction (E)-feruloyl-CoA + 2-oxoglutarate + O2 = (E)-6-hydroxyferuloyl-CoA + succinate + CO2. The protein operates within phenylpropanoid metabolism. 2-oxoglutarate (OG)- and Fe(II)-dependent dioxygenase (2OGD) involved in scopoletin and umbelliferone biosynthesis. Converts feruloyl CoA into 6'-hydroxyferuloyl CoA, and p-coumaroyl CoA into 2,4-dihydroxycinnamoyl-CoA, but has no activity with caffeoyl-CoA. The chain is Bi-functional coumaroyl CoA and feruloyl CoA ortho-hydroxylase F6H2-1-1 from Ipomoea batatas (Sweet potato).